The following is a 277-amino-acid chain: Endochitinase CHI (277 aa).

The first 31 residues, 1 to 31 (MAKPTSRNDRFALFFITLIFLILTVSKPVAS), serve as a signal peptide directing secretion. In terms of domain architecture, Chitin-binding type-1 spans 32-66 (QNCGCASDFCCSKYGYCGTTDEFCGEGCQAGPCRS). 4 disulfide bridges follow: C34-C42, C36-C48, C41-C55, and C59-C64. The segment at 75-277 (VSLEGTVTPD…GVAPGDNLTC (203 aa)) is catalytic. The Proton donor role is filled by E136. The N-linked (GlcNAc...) asparagine glycan is linked to N274.

This sequence belongs to the glycosyl hydrolase 19 family. Chitinase class I subfamily.

The enzyme catalyses Random endo-hydrolysis of N-acetyl-beta-D-glucosaminide (1-&gt;4)-beta-linkages in chitin and chitodextrins.. The polypeptide is Endochitinase CHI (Arabidopsis thaliana (Mouse-ear cress)).